The following is a 100-amino-acid chain: Aspartyl/glutamyl-tRNA(Asn/Gln) amidotransferase subunit C (100 aa).

It belongs to the GatC family. As to quaternary structure, heterotrimer of A, B and C subunits.

The catalysed reaction is L-glutamyl-tRNA(Gln) + L-glutamine + ATP + H2O = L-glutaminyl-tRNA(Gln) + L-glutamate + ADP + phosphate + H(+). It catalyses the reaction L-aspartyl-tRNA(Asn) + L-glutamine + ATP + H2O = L-asparaginyl-tRNA(Asn) + L-glutamate + ADP + phosphate + 2 H(+). Functionally, allows the formation of correctly charged Asn-tRNA(Asn) or Gln-tRNA(Gln) through the transamidation of misacylated Asp-tRNA(Asn) or Glu-tRNA(Gln) in organisms which lack either or both of asparaginyl-tRNA or glutaminyl-tRNA synthetases. The reaction takes place in the presence of glutamine and ATP through an activated phospho-Asp-tRNA(Asn) or phospho-Glu-tRNA(Gln). The sequence is that of Aspartyl/glutamyl-tRNA(Asn/Gln) amidotransferase subunit C from Petrotoga mobilis (strain DSM 10674 / SJ95).